The chain runs to 354 residues: Neutral protease 2 homolog BCIN_12g06300 (354 aa).

The first 19 residues, 1 to 19 (MRSFSKILAVASLAAIANS), serve as a signal peptide directing secretion. The propeptide occupies 20-179 (AVLKRDNNVL…PSSIDRRTVL (160 aa)). 2 disulfides stabilise this stretch: C183–C255 and C262–C280. H305 is a Zn(2+) binding site. The active site involves E306. The Zn(2+) site is built by H309 and D320.

Belongs to the peptidase M35 family. It depends on Zn(2+) as a cofactor.

Its subcellular location is the secreted. The enzyme catalyses Preferential cleavage of bonds with hydrophobic residues in P1'. Also 3-Asn-|-Gln-4 and 8-Gly-|-Ser-9 bonds in insulin B chain.. In terms of biological role, secreted metalloproteinase that allows assimilation of proteinaceous substrates. Shows high activities on basic nuclear substrates such as histone and protamine. The polypeptide is Neutral protease 2 homolog BCIN_12g06300 (Botryotinia fuckeliana (strain B05.10) (Noble rot fungus)).